The following is a 459-amino-acid chain: Cysteine--tRNA ligase (459 aa).

Cys-31 is a Zn(2+) binding site. The 'HIGH' region motif lies at 33 to 43 (PTVYYNPHIGN). Zn(2+) is bound by residues Cys-216, His-241, and Glu-245. The 'KMSKS' region motif lies at 274–278 (KMSKS). An ATP-binding site is contributed by Lys-277.

Belongs to the class-I aminoacyl-tRNA synthetase family. Monomer. Requires Zn(2+) as cofactor.

The protein localises to the cytoplasm. The enzyme catalyses tRNA(Cys) + L-cysteine + ATP = L-cysteinyl-tRNA(Cys) + AMP + diphosphate. The chain is Cysteine--tRNA ligase from Rickettsia rickettsii (strain Iowa).